The primary structure comprises 106 residues: Iron-sulfur cluster assembly protein CyaY (106 aa).

The protein belongs to the frataxin family.

Its function is as follows. Involved in iron-sulfur (Fe-S) cluster assembly. May act as a regulator of Fe-S biogenesis. In Shigella flexneri serotype 5b (strain 8401), this protein is Iron-sulfur cluster assembly protein CyaY.